The sequence spans 425 residues: UPF0597 protein VP2173 (425 aa).

Belongs to the UPF0597 family.

This is UPF0597 protein VP2173 from Vibrio parahaemolyticus serotype O3:K6 (strain RIMD 2210633).